A 257-amino-acid polypeptide reads, in one-letter code: Acetylglutamate kinase (257 aa).

Substrate contacts are provided by residues 43–44 (GG), Arg65, and Asn157. Residues 180 to 185 (DVSGIL) and 208 to 210 (IIT) each bind ATP.

This sequence belongs to the acetylglutamate kinase family. ArgB subfamily. As to quaternary structure, homodimer.

The protein resides in the cytoplasm. It carries out the reaction N-acetyl-L-glutamate + ATP = N-acetyl-L-glutamyl 5-phosphate + ADP. It functions in the pathway amino-acid biosynthesis; L-arginine biosynthesis; N(2)-acetyl-L-ornithine from L-glutamate: step 2/4. Functionally, catalyzes the ATP-dependent phosphorylation of N-acetyl-L-glutamate. In Pectobacterium atrosepticum (strain SCRI 1043 / ATCC BAA-672) (Erwinia carotovora subsp. atroseptica), this protein is Acetylglutamate kinase.